Consider the following 200-residue polypeptide: Recombination protein RecR (200 aa).

The segment at 60–75 (CVYCQALTEDDVCNIC) adopts a C4-type zinc-finger fold. The 95-residue stretch at 83 to 177 (TKLCIIESML…KISRIGFGVP (95 aa)) folds into the Toprim domain.

This sequence belongs to the RecR family.

Its function is as follows. May play a role in DNA repair. It seems to be involved in an RecBC-independent recombinational process of DNA repair. It may act with RecF and RecO. This chain is Recombination protein RecR, found in Francisella tularensis subsp. mediasiatica (strain FSC147).